Reading from the N-terminus, the 556-residue chain is MAAAAAAAAGPVFWRRLLGLLPGRPGLAALLGRLSDRLGRNPDRRRRRSPWLLLAPLLSPAVPVVTSPPCCLCAEGVHRFQWIRNLVPEFGVSSSHVRVLSSPAEFFELMKGQIKVAKRRVVMASLYLGIGPLEQELVDCLESTLEKSLQAKFPSGLRVSILLDFTRGSRGRKNSRTMLLPLLQRFPEQVRVSLFHTPNLRGLLRLLIPERFNETIGLQHIKVYLFDNNVILSGANLSDSYFTNRQDRYVFLQDCPEIADFFTELVDAVGDVSLQLQGDDTVQMVEGMVHPYKGDRAAYCRAANKRVMDVINSARMRQQMLHAQTFHSDPLLTQEDAAAAGDRRPAPDTWIYPLIQMKPFEIQIDEIVTETLLTEAERGAKVYLTTGYFNLTQAYMDLVLGTRAEYQILLASPEVNGFFGAKGVAGAIPAAYVHIERQFYSEVCSLGQQERVQLQEYWRRDWTFHAKGLWLYLAGSSLPCLTLIGSPNFGYRSVHRDLEAQIAIVTESRALQQQLHQEQEQLYRRAGVVSSATFEQPSRQVKLWVKMVTPLIKNFF.

Residues 1-28 (MAAAAAAAAGPVFWRRLLGLLPGRPGLA) constitute a mitochondrion transit peptide. Phosphoserine is present on Ser49. Residue 124 to 131 (ASLYLGIG) coordinates ATP. 2 consecutive PLD phosphodiesterase domains span residues 215-241 (TIGLQHIKVYLFDNNVILSGANLSDSY) and 419-457 (FGAKGVAGAIPAAYVHIERQFYSEVCSLGQQERVQLQEY). Active-site residues include His220, Lys222, and Asp227.

The protein belongs to the CDP-alcohol phosphatidyltransferase class-II family.

It localises to the mitochondrion. The catalysed reaction is a CDP-1,2-diacyl-sn-glycerol + sn-glycerol 3-phosphate = a 1,2-diacyl-sn-glycero-3-phospho-(1'-sn-glycero-3'-phosphate) + CMP + H(+). Its pathway is phospholipid metabolism; phosphatidylglycerol biosynthesis; phosphatidylglycerol from CDP-diacylglycerol: step 1/2. Activated by calcium and magnesium and inhibited by other bivalent cations. Functionally, functions in the biosynthesis of the anionic phospholipids phosphatidylglycerol and cardiolipin. In Bos taurus (Bovine), this protein is CDP-diacylglycerol--glycerol-3-phosphate 3-phosphatidyltransferase, mitochondrial (PGS1).